We begin with the raw amino-acid sequence, 186 residues long: Ribosome-recycling factor (186 aa).

It belongs to the RRF family.

Its subcellular location is the cytoplasm. Its function is as follows. Responsible for the release of ribosomes from messenger RNA at the termination of protein biosynthesis. May increase the efficiency of translation by recycling ribosomes from one round of translation to another. The chain is Ribosome-recycling factor from Chlorobium phaeobacteroides (strain DSM 266 / SMG 266 / 2430).